Consider the following 206-residue polypeptide: Probable GTP-binding protein EngB (206 aa).

One can recognise an EngB-type G domain in the interval 8–195 (RSDEVVLVGR…EDAVNSHFDA (188 aa)). GTP is bound by residues 16-23 (GRSNVGKS), 41-45 (GVTRQ), 60-63 (DLPG), 140-143 (NKMD), and 175-177 (ITA). Serine 23 and threonine 43 together coordinate Mg(2+).

It belongs to the TRAFAC class TrmE-Era-EngA-EngB-Septin-like GTPase superfamily. EngB GTPase family. It depends on Mg(2+) as a cofactor.

Functionally, necessary for normal cell division and for the maintenance of normal septation. This is Probable GTP-binding protein EngB from Halobacterium salinarum (strain ATCC 29341 / DSM 671 / R1).